Consider the following 372-residue polypeptide: N-methyl-L-tryptophan oxidase (372 aa).

Asp4–His34 is a binding site for FAD. Cys308 carries the S-8alpha-FAD cysteine modification.

Belongs to the MSOX/MTOX family. MTOX subfamily. As to quaternary structure, monomer. It depends on FAD as a cofactor.

The enzyme catalyses N(alpha)-methyl-L-tryptophan + O2 + H2O = L-tryptophan + formaldehyde + H2O2. In terms of biological role, catalyzes the oxidative demethylation of N-methyl-L-tryptophan. The sequence is that of N-methyl-L-tryptophan oxidase from Escherichia coli O17:K52:H18 (strain UMN026 / ExPEC).